A 222-amino-acid polypeptide reads, in one-letter code: Ribose-5-phosphate isomerase A (222 aa).

Substrate contacts are provided by residues 28-31 (TGST), 81-84 (DGAD), and 94-97 (KGGG). E103 serves as the catalytic Proton acceptor. K121 provides a ligand contact to substrate.

Belongs to the ribose 5-phosphate isomerase family. As to quaternary structure, homodimer.

It catalyses the reaction aldehydo-D-ribose 5-phosphate = D-ribulose 5-phosphate. It functions in the pathway carbohydrate degradation; pentose phosphate pathway; D-ribose 5-phosphate from D-ribulose 5-phosphate (non-oxidative stage): step 1/1. Catalyzes the reversible conversion of ribose-5-phosphate to ribulose 5-phosphate. This chain is Ribose-5-phosphate isomerase A, found in Azoarcus sp. (strain BH72).